Consider the following 669-residue polypeptide: DNA ligase (669 aa).

NAD(+) is bound by residues 34 to 38 (DAEYD), 83 to 84 (SL), and E114. K116 (N6-AMP-lysine intermediate) is an active-site residue. R137, E171, K287, and K311 together coordinate NAD(+). Positions 405, 408, 423, and 428 each coordinate Zn(2+). The BRCT domain occupies 591–669 (NVESYFAGKT…EERFLQELNK (79 aa)).

The protein belongs to the NAD-dependent DNA ligase family. LigA subfamily. It depends on Mg(2+) as a cofactor. The cofactor is Mn(2+).

The enzyme catalyses NAD(+) + (deoxyribonucleotide)n-3'-hydroxyl + 5'-phospho-(deoxyribonucleotide)m = (deoxyribonucleotide)n+m + AMP + beta-nicotinamide D-nucleotide.. Its function is as follows. DNA ligase that catalyzes the formation of phosphodiester linkages between 5'-phosphoryl and 3'-hydroxyl groups in double-stranded DNA using NAD as a coenzyme and as the energy source for the reaction. It is essential for DNA replication and repair of damaged DNA. The chain is DNA ligase from Bacillus cereus (strain ATCC 14579 / DSM 31 / CCUG 7414 / JCM 2152 / NBRC 15305 / NCIMB 9373 / NCTC 2599 / NRRL B-3711).